The following is a 235-amino-acid chain: Ornithine decarboxylase antizyme 3 (235 aa).

Phosphoserine is present on residues Ser-9 and Ser-12.

The protein belongs to the ODC antizyme family. In terms of assembly, interacts with ODC1 and thereby sterically blocks ODC homodimerization. Interacts with AZIN2; this interaction disrupts the interaction between the antizyme and ODC1. Interacts with GGN. Testis specific.

It localises to the nucleus. It is found in the cytoplasm. Its function is as follows. Ornithine decarboxylase (ODC) antizyme protein that negatively regulates ODC activity and intracellular polyamine biosynthesis and uptake in response to increased intracellular polyamine levels. Binds to ODC monomers, inhibiting the assembly of the functional ODC homodimers. Does not target the ODC monomers for degradation, which allows a protein synthesis-independent restoration of ODC activity. Stabilizes AZIN2 by interfering with its ubiquitination. Involved in the translocation of AZNI2 from ER-Golgi intermediate compartment (ERGIC) to the cytosol. Probably plays a key role in spermatogenesis by regulating the intracellular concentration of polyamines in haploid germ cells. The protein is Ornithine decarboxylase antizyme 3 (OAZ3) of Homo sapiens (Human).